We begin with the raw amino-acid sequence, 95 residues long: Large ribosomal subunit protein uL23 (95 aa).

The protein belongs to the universal ribosomal protein uL23 family. In terms of assembly, part of the 50S ribosomal subunit. Contacts protein L29, and trigger factor when it is bound to the ribosome.

One of the early assembly proteins it binds 23S rRNA. One of the proteins that surrounds the polypeptide exit tunnel on the outside of the ribosome. Forms the main docking site for trigger factor binding to the ribosome. In Geobacillus thermodenitrificans (strain NG80-2), this protein is Large ribosomal subunit protein uL23.